Here is a 1380-residue protein sequence, read N- to C-terminus: Carboxypeptidase D (1380 aa).

Positions 1-31 are cleaved as a signal peptide; sequence MASGRDERPPWRLGRLLLLMCLLLLGSSARA. Topologically, residues 32–1299 are extracellular; sequence AHIKKAEATT…DNRIFGLPRE (1268 aa). Positions 57 to 380 constitute a Peptidase M14 1 domain; it reads RYYHEEELES…ESLITLIEKV (324 aa). 2 residues coordinate Zn(2+): His-139 and Glu-142. The Cell attachment site signature appears at 162-164; the sequence is RGD. The N-linked (GlcNAc...) asparagine glycan is linked to Asn-172. The segment at 190–232 is disordered; that stretch reads AREGDCGFGDGGPSGASGRDNSRGRDLNRSFPDQFSTGEPPAL. Over residues 195–204 the composition is skewed to gly residues; that stretch reads CGFGDGGPSG. Asn-217 carries N-linked (GlcNAc...) asparagine glycosylation. His-257 provides a ligand contact to Zn(2+). Residue Tyr-265 is modified to Phosphotyrosine. Ser-270 bears the Phosphoserine mark. Glu-350 functions as the Proton donor/acceptor in the catalytic mechanism. N-linked (GlcNAc...) asparagine glycans are attached at residues Asn-399, Asn-410, Asn-429, and Asn-522. The region spanning 502 to 792 is the Peptidase M14 2 domain; sequence HHHHFPDMEI…RSLIQFMKQV (291 aa). Residues His-564 and Glu-567 each coordinate Zn(2+). Asn-626 carries an N-linked (GlcNAc...) asparagine glycan. His-671 is a binding site for Zn(2+). Glu-762 (proton donor/acceptor) is an active-site residue. N-linked (GlcNAc...) asparagine glycosylation is found at Asn-811, Asn-855, Asn-867, and Asn-879. Residues 874–899 are disordered; that stretch reads STDSNNESKKGKGASSSTNDASDPTT. The span at 887–897 shows a compositional bias: polar residues; the sequence is ASSSTNDASDP. The 280-residue stretch at 932-1211 folds into the Peptidase M14 3 domain; the sequence is RYHSYKDLSE…RSLLSMLVEV (280 aa). N-linked (GlcNAc...) asparagine glycosylation is found at Asn-955, Asn-978, Asn-1070, and Asn-1142. The chain crosses the membrane as a helical span at residues 1300-1320; sequence LVVTVSGATMSALILTACIIW. S-palmitoyl cysteine attachment occurs at residues Cys-1317, Cys-1321, and Cys-1323. The Cytoplasmic portion of the chain corresponds to 1321-1380; sequence CICSIKSNRHKDGFHRLRQHHDEYEDEIRMMSTGSKKSLLSHEFQDETDTEEETLYSSKH. 2 positions are modified to phosphoserine: Ser-1358 and Ser-1361. A disordered region spans residues 1359 to 1380; it reads LLSHEFQDETDTEEETLYSSKH. Thr-1368 and Thr-1370 each carry phosphothreonine.

The protein belongs to the peptidase M14 family. Zn(2+) is required as a cofactor. In terms of tissue distribution, highly expressed in placenta, pancreas and hepatoma cells. Lower levels found in skeletal muscle, heart and colon carcinoma and melanoma cell lines.

The protein localises to the cell membrane. It catalyses the reaction Releases C-terminal Arg and Lys from polypeptides.. The chain is Carboxypeptidase D (CPD) from Homo sapiens (Human).